The primary structure comprises 1069 residues: Protocadherin-7 (1069 aa).

An N-terminal signal peptide occupies residues 1–28 (MLRMRTAGWARGWCLGCCLLLPLSLSLA). Cadherin domains are found at residues 29–143 (AAKQ…TPTF), 144–308 (PSPV…SPRF), 309–415 (EKSV…VPSI), 424–535 (PLKD…PPMF), 536–639 (GQSV…DPKF), 640–742 (MQDV…APTV), and 745–862 (PKNI…IPLT). The Extracellular portion of the chain corresponds to 29–879 (AAKQLLRYRL…SYEISKQRLS (851 aa)). A glycan (N-linked (GlcNAc...) asparagine) is linked at Asn-79. A disordered region spans residues 182 to 242 (LLQEPGGGGS…GGTNPGGRSS (61 aa)). Gly residues predominate over residues 207–221 (PGGGGNGASGGGSGG). N-linked (GlcNAc...) asparagine glycosylation is found at Asn-689, Asn-747, Asn-780, Asn-822, Asn-840, and Asn-845. A helical transmembrane segment spans residues 880-900 (IVIGVVAGIMTVILIILIVVM). Over 901 to 1069 (ARYCRSKNKN…RLHPYITVFG (169 aa)) the chain is Cytoplasmic. Residues 910-988 (NGYEAGKKDH…RYRSVNGGPG (79 aa)) form a disordered region. Over residues 930-944 (KSKKPKKDKKNKKSK) the composition is skewed to basic residues. Residues Ser-989 and Ser-1011 each carry the phosphoserine modification.

In terms of tissue distribution, expressed predominantly in brain and heart and at lower levels in various other tissues.

It localises to the cell membrane. In Homo sapiens (Human), this protein is Protocadherin-7 (PCDH7).